The sequence spans 238 residues: LexA repressor (238 aa).

A DNA-binding region (H-T-H motif) is located at residues 26 to 46; the sequence is FDEMKDALDLASKSGIHRLIT. Active-site for autocatalytic cleavage activity residues include S158 and K196.

Belongs to the peptidase S24 family. Homodimer.

It carries out the reaction Hydrolysis of Ala-|-Gly bond in repressor LexA.. Its function is as follows. Represses a number of genes involved in the response to DNA damage (SOS response), including recA and lexA. In the presence of single-stranded DNA, RecA interacts with LexA causing an autocatalytic cleavage which disrupts the DNA-binding part of LexA, leading to derepression of the SOS regulon and eventually DNA repair. The protein is LexA repressor of Sinorhizobium medicae (strain WSM419) (Ensifer medicae).